The sequence spans 150 residues: Macrodomain Ter protein (150 aa).

This sequence belongs to the MatP family. As to quaternary structure, homodimer.

The protein localises to the cytoplasm. Its function is as follows. Required for spatial organization of the terminus region of the chromosome (Ter macrodomain) during the cell cycle. Prevents early segregation of duplicated Ter macrodomains during cell division. Binds specifically to matS, which is a 13 bp signature motif repeated within the Ter macrodomain. This Escherichia coli O6:K15:H31 (strain 536 / UPEC) protein is Macrodomain Ter protein.